The sequence spans 201 residues: Superoxide dismutase [Mn] (201 aa).

Mn(2+) contacts are provided by H27, H81, D163, and H167.

The protein belongs to the iron/manganese superoxide dismutase family. Homodimer. Mn(2+) serves as cofactor.

The protein resides in the secreted. It catalyses the reaction 2 superoxide + 2 H(+) = H2O2 + O2. Destroys superoxide anion radicals which are normally produced within the cells and which are toxic to biological systems. The sequence is that of Superoxide dismutase [Mn] (sodA) from Streptococcus pyogenes serotype M6 (strain ATCC BAA-946 / MGAS10394).